Reading from the N-terminus, the 564-residue chain is Proline--tRNA ligase (564 aa).

Belongs to the class-II aminoacyl-tRNA synthetase family. ProS type 1 subfamily. In terms of assembly, homodimer.

Its subcellular location is the cytoplasm. It catalyses the reaction tRNA(Pro) + L-proline + ATP = L-prolyl-tRNA(Pro) + AMP + diphosphate. Functionally, catalyzes the attachment of proline to tRNA(Pro) in a two-step reaction: proline is first activated by ATP to form Pro-AMP and then transferred to the acceptor end of tRNA(Pro). As ProRS can inadvertently accommodate and process non-cognate amino acids such as alanine and cysteine, to avoid such errors it has two additional distinct editing activities against alanine. One activity is designated as 'pretransfer' editing and involves the tRNA(Pro)-independent hydrolysis of activated Ala-AMP. The other activity is designated 'posttransfer' editing and involves deacylation of mischarged Ala-tRNA(Pro). The misacylated Cys-tRNA(Pro) is not edited by ProRS. This is Proline--tRNA ligase from Bacillus subtilis (strain 168).